A 218-amino-acid chain; its full sequence is Attacin-B (218 aa).

The N-terminal stretch at 1 to 17 (MQKTSILILALFAIAEA) is a signal peptide. A propeptide spanning residues 18–28 (VPTTGPIRVRR) is cleaved from the precursor.

The protein belongs to the attacin/sarcotoxin-2 family. As to expression, hemolymph (at protein level).

It localises to the secreted. In terms of biological role, hemolymph antibacterial protein. This is Attacin-B (AttB) from Drosophila melanogaster (Fruit fly).